Consider the following 934-residue polypeptide: Replication factor C subunit 1 (934 aa).

Residues Met-1–Arg-190 form a disordered region. The residue at position 27 (Ser-27) is a Phosphoserine. Basic residues predominate over residues Lys-29–Ile-39. Polar residues predominate over residues Gly-89 to Arg-104. The span at Thr-118 to Lys-128 shows a compositional bias: basic and acidic residues. The span at Thr-165–Lys-186 shows a compositional bias: low complexity. A BRCT domain is found at Gly-236 to Ala-326. ATP-binding positions include Thr-362, Cys-374, Gly-416–Thr-423, and Asn-519. Over residues Ala-876–Ile-895 the composition is skewed to acidic residues. A disordered region spans residues Ala-876–Ala-934.

Belongs to the activator 1 large subunit family. Heteropentamer of subunits rfc1, rfc2, rfc3, rfc4 and rfc5 that forms a complex (RFC) with PCNA in the presence of ATP. Interacts with cdc24.

It localises to the nucleus. Its subcellular location is the nucleolus. Functionally, the elongation of primed DNA templates by DNA polymerase delta and epsilon requires the action of the accessory proteins PCNA and activator 1. Subunit 1 is essential for cell cycle progression. It may associate with components of the DNA replication machinery and serve to enhance the efficiency of DNA replication. The sequence is that of Replication factor C subunit 1 (rfc1) from Schizosaccharomyces pombe (strain 972 / ATCC 24843) (Fission yeast).